A 249-amino-acid chain; its full sequence is Probable transcriptional regulatory protein Strop_1792 (249 aa).

It belongs to the TACO1 family.

It is found in the cytoplasm. The chain is Probable transcriptional regulatory protein Strop_1792 from Salinispora tropica (strain ATCC BAA-916 / DSM 44818 / JCM 13857 / NBRC 105044 / CNB-440).